Here is a 208-residue protein sequence, read N- to C-terminus: Putative ADP-ribose pyrophosphatase YjhB (208 aa).

The 127-residue stretch at 69 to 195 folds into the Nudix hydrolase domain; that stretch reads TPKADVRGAV…NTPSQLSMLF (127 aa). The Nudix box signature appears at 100-121; the sequence is GFCEIGLSPAENVVKEIKEESG. Mg(2+)-binding residues include E115 and E119.

It belongs to the Nudix hydrolase family. The cofactor is Mg(2+). It depends on Mn(2+) as a cofactor.

Its function is as follows. Probably mediates the hydrolysis of some nucleoside diphosphate derivatives. The chain is Putative ADP-ribose pyrophosphatase YjhB (yjhB) from Bacillus subtilis (strain 168).